We begin with the raw amino-acid sequence, 117 residues long: Small ribosomal subunit protein eS25 (117 aa).

Positions 1–38 (MPPKKDAKSSAKQPQKTQKKKEGSGGGKAKKKKWSKGK) are disordered. The span at 28-37 (KAKKKKWSKG) shows a compositional bias: basic residues.

This sequence belongs to the eukaryotic ribosomal protein eS25 family.

The chain is Small ribosomal subunit protein eS25 (RpS25) from Drosophila melanogaster (Fruit fly).